The primary structure comprises 230 residues: Thymidylate kinase (230 aa).

20–27 (GGEGAGKS) is a binding site for ATP.

This sequence belongs to the thymidylate kinase family.

It carries out the reaction dTMP + ATP = dTDP + ADP. In terms of biological role, phosphorylation of dTMP to form dTDP in both de novo and salvage pathways of dTTP synthesis. The chain is Thymidylate kinase from Rhodopseudomonas palustris (strain TIE-1).